Here is a 702-residue protein sequence, read N- to C-terminus: Lipase maturation factor 2 (702 aa).

10 helical membrane passes run Leu10–Ile30, Ala75–Leu95, Phe102–Leu122, Tyr123–Leu143, Asp164–Val184, Leu226–Ile246, Leu259–Val279, Leu316–Leu336, Val363–Leu383, and Phe396–Ser416. Asn488 is a glycosylation site (N-linked (GlcNAc...) asparagine). A helical membrane pass occupies residues Gln628 to Ile648. The segment at Leu660–Lys702 is disordered. A compositionally biased stretch (basic and acidic residues) spans Gln665–Ala681. A compositionally biased stretch (polar residues) spans Val682–Ser695.

Belongs to the lipase maturation factor family.

The protein resides in the endoplasmic reticulum membrane. Functionally, involved in the maturation of specific proteins in the endoplasmic reticulum. May be required for maturation and transport of active lipoprotein lipase (LPL) through the secretory pathway. The polypeptide is Lipase maturation factor 2 (Lmf2) (Rattus norvegicus (Rat)).